We begin with the raw amino-acid sequence, 547 residues long: Chaperonin GroEL (547 aa).

Residues 30-33, Lys-51, 87-91, Gly-416, 480-482, and Asp-496 each bind ATP; these read TLGP, DGTTT, and NAA.

This sequence belongs to the chaperonin (HSP60) family. In terms of assembly, forms a cylinder of 14 subunits composed of two heptameric rings stacked back-to-back. Interacts with the co-chaperonin GroES.

It is found in the cytoplasm. The catalysed reaction is ATP + H2O + a folded polypeptide = ADP + phosphate + an unfolded polypeptide.. Together with its co-chaperonin GroES, plays an essential role in assisting protein folding. The GroEL-GroES system forms a nano-cage that allows encapsulation of the non-native substrate proteins and provides a physical environment optimized to promote and accelerate protein folding. This is Chaperonin GroEL from Pseudoalteromonas translucida (strain TAC 125).